We begin with the raw amino-acid sequence, 460 residues long: Omega-3 fatty acid desaturase, chloroplastic (460 aa).

Positions histidine 177–histidine 181 match the Histidine box-1 motif. Positions histidine 213–histidine 217 match the Histidine box-2 motif. The short motif at histidine 380 to histidine 384 is the Histidine box-3 element.

Belongs to the fatty acid desaturase type 1 family.

Its subcellular location is the plastid. The protein localises to the chloroplast membrane. The protein operates within lipid metabolism; polyunsaturated fatty acid biosynthesis. In terms of biological role, chloroplast omega-3 fatty acid desaturase introduces the third double bond in the biosynthesis of 16:3 and 18:3 fatty acids, important constituents of plant membranes. It is thought to use ferredoxin as an electron donor and to act on fatty acids esterified to galactolipids, sulfolipids and phosphatidylglycerol. The sequence is that of Omega-3 fatty acid desaturase, chloroplastic (FAD7A-1) from Ricinus communis (Castor bean).